Here is a 430-residue protein sequence, read N- to C-terminus: Serine--tRNA ligase (430 aa).

231–233 (TSE) is a binding site for L-serine. 262-264 (RSE) is an ATP binding site. Glu285 contacts L-serine. An ATP-binding site is contributed by 349 to 352 (EISS). Ser385 lines the L-serine pocket.

This sequence belongs to the class-II aminoacyl-tRNA synthetase family. Type-1 seryl-tRNA synthetase subfamily. Homodimer. The tRNA molecule binds across the dimer.

The protein localises to the cytoplasm. The catalysed reaction is tRNA(Ser) + L-serine + ATP = L-seryl-tRNA(Ser) + AMP + diphosphate + H(+). The enzyme catalyses tRNA(Sec) + L-serine + ATP = L-seryl-tRNA(Sec) + AMP + diphosphate + H(+). Its pathway is aminoacyl-tRNA biosynthesis; selenocysteinyl-tRNA(Sec) biosynthesis; L-seryl-tRNA(Sec) from L-serine and tRNA(Sec): step 1/1. In terms of biological role, catalyzes the attachment of serine to tRNA(Ser). Is also able to aminoacylate tRNA(Sec) with serine, to form the misacylated tRNA L-seryl-tRNA(Sec), which will be further converted into selenocysteinyl-tRNA(Sec). The sequence is that of Serine--tRNA ligase from Ruegeria pomeroyi (strain ATCC 700808 / DSM 15171 / DSS-3) (Silicibacter pomeroyi).